The chain runs to 758 residues: Relaxin receptor 1 (758 aa).

Topologically, residues 1-409 are extracellular; the sequence is MTSGPFFFCI…ENLLASIIQR (409 aa). The region spanning 26–63 is the LDL-receptor class A domain; the sequence is SCPLGSFPCGNMSRCLPQLLHCNGVDDCGNRADEDHCG. Intrachain disulfides connect Cys-27-Cys-40, Cys-34-Cys-53, and Cys-47-Cys-62. An N-linked (GlcNAc...) asparagine glycan is attached at Asn-36. Residues Leu-45, Asn-48, Val-50, Asp-52, Asp-58, and Glu-59 each coordinate Ca(2+). Asn-127 carries an N-linked (GlcNAc...) asparagine glycan. 10 LRR repeats span residues 127-148, 151-172, 175-196, 199-220, 223-244, 248-269, 272-293, 296-317, 320-341, and 344-365; these read NVTV…GFRK, ELQK…AFRG, SLTK…VFED, RLEW…TFYG, SLIL…PLCQ, RLHW…TFIS, NLTV…AFTH, KLDE…IFKD, ELSQ…QFDC, and KLKS…MFRP. Residues Asn-264 and Asn-272 are each glycosylated (N-linked (GlcNAc...) asparagine). The N-linked (GlcNAc...) asparagine glycan is linked to Asn-325. An N-linked (GlcNAc...) asparagine glycan is attached at Asn-368. Residues 410–430 form a helical membrane-spanning segment; sequence VFVWVVSAITCFGNIFVICMR. The Cytoplasmic segment spans residues 431–443; it reads PYIRSENKLHAMS. Residues 444 to 464 form a helical membrane-spanning segment; that stretch reads IISLCCADCLMGVYLFVIGAF. Over 465-486 the chain is Extracellular; sequence DLKFRGEYNKHAQPWMESVHCQ. Cys-485 and Cys-563 are joined by a disulfide. Residues 487 to 507 form a helical membrane-spanning segment; that stretch reads FMGSLAILSTEVSVLLLTFLT. Over 508–527 the chain is Cytoplasmic; that stretch reads LEKYICIVYPFRCLRPRKCR. The chain crosses the membrane as a helical span at residues 528–548; it reads TITVLIFIWIIGFIVAFAPLG. The Extracellular portion of the chain corresponds to 549 to 577; it reads NKEFFKNYYGTNGVCFPLHSEDTGSTGAQ. Residues 578–598 traverse the membrane as a helical segment; that stretch reads IYSVVIFLGINLVAFIIIVFS. Residues 599–629 are Cytoplasmic-facing; it reads YGSMFYSVHQSSVTVTEIQKQVKKEVVLAKR. The helical transmembrane segment at 630-650 threads the bilayer; sequence FFFIVFTDALCWIPIFILKFL. Ser-651 is a topological domain (extracellular). Residues 652–672 traverse the membrane as a helical segment; the sequence is LLQVEIPDSITSWVVIFILPI. Residues 673-758 are Cytoplasmic-facing; it reads NSALNPIIYT…SQSSRLNSYS (86 aa).

The protein belongs to the G-protein coupled receptor 1 family. Interacts with C1QTNF8.

The protein localises to the cell membrane. Receptor for relaxins. The activity of this receptor is mediated by G proteins leading to stimulation of adenylate cyclase and an increase of cAMP. Binding of the ligand may also activate a tyrosine kinase pathway that inhibits the activity of a phosphodiesterase that degrades cAMP. The chain is Relaxin receptor 1 (Rxfp1) from Mus musculus (Mouse).